We begin with the raw amino-acid sequence, 168 residues long: Transcription elongation factor GreB (168 aa).

Positions 61 to 84 (KKMLREIDSRVRFLRKRLENLKVV) form a coiled coil.

Belongs to the GreA/GreB family. GreB subfamily.

In terms of biological role, necessary for efficient RNA polymerase transcription elongation past template-encoded arresting sites. The arresting sites in DNA have the property of trapping a certain fraction of elongating RNA polymerases that pass through, resulting in locked ternary complexes. Cleavage of the nascent transcript by cleavage factors such as GreA or GreB allows the resumption of elongation from the new 3'terminus. GreB releases sequences of up to 9 nucleotides in length. In Pseudomonas aeruginosa (strain ATCC 15692 / DSM 22644 / CIP 104116 / JCM 14847 / LMG 12228 / 1C / PRS 101 / PAO1), this protein is Transcription elongation factor GreB.